The following is a 563-amino-acid chain: Eukaryotic translation initiation factor 3 subunit D (563 aa).

Positions 95 to 136 are disordered; that stretch reads PGYMRNRNRFNQRGGYRRDNRGGRFQGQGGNMGMQNLSRGRD. The tract at residues 294 to 308 is RNA gate; the sequence is EFDLLTVGETANDLN. The disordered stretch occupies residues 528 to 563; sequence IPNSTFETDEEDDDDDEDDVENDDGDDEKDEGDGED. The span at 534–563 shows a compositional bias: acidic residues; the sequence is ETDEEDDDDDEDDVENDDGDDEKDEGDGED.

Belongs to the eIF-3 subunit D family. Component of the eukaryotic translation initiation factor 3 (eIF-3) complex.

Its subcellular location is the cytoplasm. Functionally, mRNA cap-binding component of the eukaryotic translation initiation factor 3 (eIF-3) complex, which is involved in protein synthesis of a specialized repertoire of mRNAs and, together with other initiation factors, stimulates binding of mRNA and methionyl-tRNAi to the 40S ribosome. The eIF-3 complex specifically targets and initiates translation of a subset of mRNAs involved in cell proliferation. In the eIF-3 complex, eif3d specifically recognizes and binds the 7-methylguanosine cap of a subset of mRNAs. In Nematostella vectensis (Starlet sea anemone), this protein is Eukaryotic translation initiation factor 3 subunit D.